Consider the following 434-residue polypeptide: 3-phosphoshikimate 1-carboxyvinyltransferase (434 aa).

3-phosphoshikimate contacts are provided by K22, S23, and R27. K22 serves as a coordination point for phosphoenolpyruvate. Residues G93 and R121 each contribute to the phosphoenolpyruvate site. 3-phosphoshikimate is bound by residues S168, S169, Q170, S199, D320, and K347. Phosphoenolpyruvate is bound at residue Q170. Catalysis depends on D320, which acts as the Proton acceptor. Phosphoenolpyruvate is bound by residues R351, R394, and K419.

It belongs to the EPSP synthase family. In terms of assembly, monomer.

It is found in the cytoplasm. It catalyses the reaction 3-phosphoshikimate + phosphoenolpyruvate = 5-O-(1-carboxyvinyl)-3-phosphoshikimate + phosphate. It functions in the pathway metabolic intermediate biosynthesis; chorismate biosynthesis; chorismate from D-erythrose 4-phosphate and phosphoenolpyruvate: step 6/7. Catalyzes the transfer of the enolpyruvyl moiety of phosphoenolpyruvate (PEP) to the 5-hydroxyl of shikimate-3-phosphate (S3P) to produce enolpyruvyl shikimate-3-phosphate and inorganic phosphate. This is 3-phosphoshikimate 1-carboxyvinyltransferase from Burkholderia lata (strain ATCC 17760 / DSM 23089 / LMG 22485 / NCIMB 9086 / R18194 / 383).